The primary structure comprises 143 residues: Nucleoside diphosphate kinase (143 aa).

ATP contacts are provided by K11, F59, R87, T93, R104, and N114. Catalysis depends on H117, which acts as the Pros-phosphohistidine intermediate.

The protein belongs to the NDK family. As to quaternary structure, homotetramer. The cofactor is Mg(2+).

It is found in the cytoplasm. It carries out the reaction a 2'-deoxyribonucleoside 5'-diphosphate + ATP = a 2'-deoxyribonucleoside 5'-triphosphate + ADP. The catalysed reaction is a ribonucleoside 5'-diphosphate + ATP = a ribonucleoside 5'-triphosphate + ADP. Its function is as follows. Major role in the synthesis of nucleoside triphosphates other than ATP. The ATP gamma phosphate is transferred to the NDP beta phosphate via a ping-pong mechanism, using a phosphorylated active-site intermediate. The protein is Nucleoside diphosphate kinase of Shewanella oneidensis (strain ATCC 700550 / JCM 31522 / CIP 106686 / LMG 19005 / NCIMB 14063 / MR-1).